The primary structure comprises 101 residues: Aspartyl/glutamyl-tRNA(Asn/Gln) amidotransferase subunit C (101 aa).

This sequence belongs to the GatC family. Heterotrimer of A, B and C subunits.

The catalysed reaction is L-glutamyl-tRNA(Gln) + L-glutamine + ATP + H2O = L-glutaminyl-tRNA(Gln) + L-glutamate + ADP + phosphate + H(+). It carries out the reaction L-aspartyl-tRNA(Asn) + L-glutamine + ATP + H2O = L-asparaginyl-tRNA(Asn) + L-glutamate + ADP + phosphate + 2 H(+). Functionally, allows the formation of correctly charged Asn-tRNA(Asn) or Gln-tRNA(Gln) through the transamidation of misacylated Asp-tRNA(Asn) or Glu-tRNA(Gln) in organisms which lack either or both of asparaginyl-tRNA or glutaminyl-tRNA synthetases. The reaction takes place in the presence of glutamine and ATP through an activated phospho-Asp-tRNA(Asn) or phospho-Glu-tRNA(Gln). This Enterococcus faecalis (strain ATCC 700802 / V583) protein is Aspartyl/glutamyl-tRNA(Asn/Gln) amidotransferase subunit C.